The chain runs to 511 residues: Lysine--tRNA ligase 2 (511 aa).

The interval 1–22 (MTMEINNTDPFEKMPLPDDSGL) is disordered. Positions 421 and 428 each coordinate Mg(2+).

Belongs to the class-II aminoacyl-tRNA synthetase family. Homodimer. Mg(2+) serves as cofactor.

It localises to the cytoplasm. The enzyme catalyses tRNA(Lys) + L-lysine + ATP = L-lysyl-tRNA(Lys) + AMP + diphosphate. This is Lysine--tRNA ligase 2 from Methanosarcina mazei (strain ATCC BAA-159 / DSM 3647 / Goe1 / Go1 / JCM 11833 / OCM 88) (Methanosarcina frisia).